We begin with the raw amino-acid sequence, 262 residues long: Oxidoreductase GME11367 (262 aa).

The protein belongs to the avfA family.

It functions in the pathway secondary metabolite biosynthesis. Functionally, oxidoreductase; part of the gene cluster that mediates the biosynthesis of dibenzodioxocinones such as pestalotiollide B, a novel class of inhibitors against cholesterol ester transfer protein (CEPT). The biosynthesis initiates from condensation of acetate and malonate units catalyzed by the non-reducing PKS pks8/GME11356. Pks8/GME11356 lacks a thioesterase (TE) domain, which is important to the cyclizing of the third ring of atrochrysone carboxylic acid, and the esterase GME11355 might play the role of TE and catalyzes the cyclization reaction of the C ring. The lactamase-like protein GME11357 (or other beta-lactamases in Pestalotiopsis microspora) probably hydrolyzes the thioester bond between the ACP of pks8/GME11356 and the intermediate to release atrochrysone carboxylic acid, which is spontaneously dehydrates to form endocrocin anthrone. Endocrocin anthrone is further converted to emodin via the endocrocin intermediate. Emodin is then oxidized by several enzymes such as the Baeyer-Villiger oxidase GME11358, the oxidoreductase GME11367, the short chain dehydrogenase/reductase GME11373, as well as by other oxidoreductases from the cluster, to modify the A and C rings and open the B ring, and finally yield monodictyphenone. The prenyltransferase GME11375 may catalyze the addition reaction between the C5 side chains and the carbon bone of dibenzodioxocinones. The remaining biochemical reactions to the final product dibenzodioxocinones should be methylation catalyzed by methyltransferase GME11366 and reduction and lactonization reaction catalyzed by a series of oxidordeuctases. The protein is Oxidoreductase GME11367 of Pestalotiopsis microspora.